We begin with the raw amino-acid sequence, 232 residues long: Dephospho-CoA kinase (232 aa).

Residues 3-206 (IVGLTGGIAS…RPLTWIEFWR (204 aa)) form the DPCK domain. 8–15 (GGIASGKS) lines the ATP pocket.

It belongs to the CoaE family.

It is found in the peroxisome. It catalyses the reaction 3'-dephospho-CoA + ATP = ADP + CoA + H(+). It participates in cofactor biosynthesis; coenzyme A biosynthesis; CoA from (R)-pantothenate: step 5/5. In terms of biological role, catalyzes the phosphorylation of the 3'-hydroxyl group of dephosphocoenzyme A to form coenzyme A. The polypeptide is Dephospho-CoA kinase (Arabidopsis thaliana (Mouse-ear cress)).